The primary structure comprises 104 residues: MSKVIHVTSNEELDKYLQHQRVVVDFSAEWCGPCRAIAPVFDKLSNEFTTFTFVHVDIDKVNTHPIVKEIRSVPTFYFYVNGAKVSEFSGANEATLRSTLEANI.

Residues serine 2–isoleucine 104 form the Thioredoxin domain. Active-site nucleophile residues include cysteine 31 and cysteine 34. Cysteine 31 and cysteine 34 form a disulfide bridge.

It belongs to the thioredoxin family.

Its function is as follows. Participates in various redox reactions through the reversible oxidation of its active center dithiol to a disulfide and catalyzes dithiol-disulfide exchange reactions. This is Thioredoxin-3 (trxC) from Dictyostelium discoideum (Social amoeba).